We begin with the raw amino-acid sequence, 81 residues long: Protein RADIALIS-like 3 (81 aa).

The SANT domain maps to 7 to 62; sequence SSSASWTRKENKLFERALATYDQDTPDRWHNVARAVGGKSAEEVRRHYELLIRDVN.

Expressed just outside the vascular bundles in the rosette stem and the leaf traces. Not detected in floral primordia.

It is found in the nucleus. Its function is as follows. Probable transcription factor. The protein is Protein RADIALIS-like 3 (RL3) of Arabidopsis thaliana (Mouse-ear cress).